The following is a 155-amino-acid chain: MASLKCSTVVCVICLEKPKYRCPACRVPYCSVVCFRKHKEQCNPETRPVEKKIRSALPTKTVKPVENKDDDDSIADFLNSDEEEDRVSLQNLKNLGESATLRSLLLNPHLRQLMVNLDQGEDKAKLMRAYMQEPLFVEFADCCLGIVEPSQNEES.

Cys-11, Cys-14, Cys-22, Cys-25, Cys-30, Cys-34, His-38, and Cys-42 together coordinate Zn(2+). Residues 11–42 (CVICLEKPKYRCPACRVPYCSVVCFRKHKEQC) form an HIT-type zinc finger. Ser-80 is modified (phosphoserine).

As to quaternary structure, thyroid receptor interacting proteins (TRIPs) specifically interact with the ligand binding domain of the thyroid receptor (TR). Requires the presence of thyroid hormone for its interaction. Interacts with NUFIP1. Interacts (via HIT-type zinc finger) with the RUVBL1/RUVBL2 complex in the presence of ADP.

The protein resides in the cytoplasm. The protein localises to the nucleus. The polypeptide is Zinc finger HIT domain-containing protein 3 (ZNHIT3) (Homo sapiens (Human)).